The primary structure comprises 739 residues: G2 and S phase-expressed protein 1 (739 aa).

The span at 1 to 11 (MEGGGGRDEPS) shows a compositional bias: basic and acidic residues. Residues 1–20 (MEGGGGRDEPSACRAGDVNM) are disordered. A Phosphoserine modification is found at S91. Disordered stretches follow at residues 116 to 136 (SRNQ…GVER), 149 to 306 (EKEK…AIPV), and 320 to 639 (PGST…GDAA). Basic and acidic residues predominate over residues 149-165 (EKEKEMKKSPTSLKRET). Phosphoserine is present on S157. T159 is subject to Phosphothreonine. Residues S171, S187, S208, S247, and S262 each carry the phosphoserine modification. Low complexity predominate over residues 181 to 195 (PRLLASSPALPSSGA). Basic and acidic residues predominate over residues 268–280 (IPAEKESHRDVLP). 2 stretches are compositionally biased toward low complexity: residues 284–294 (APGAVNVPAAG) and 330–342 (SSSG…ASSA). Position 331 is a phosphoserine (S331). A compositionally biased stretch (polar residues) spans 360 to 372 (PANSSRPLSNISK). Positions 411–424 (TAPPSASPTQPQTP) are enriched in low complexity. Polar residues-rich tracts occupy residues 430-446 (WLNS…LNKT) and 455-470 (CLNS…TNQF). Position 480 is a phosphoserine (S480). Over residues 481–522 (PDSSTPKLSRAQRPQSCTSVGRVTVHSTPVRRSSGPAPQSLL) the composition is skewed to polar residues. Residue T485 is modified to Phosphothreonine. S496, S499, S514, S520, S523, and S528 each carry phosphoserine. T532 bears the Phosphothreonine mark. A phosphoserine mark is found at S535 and S555. The segment covering 577–590 (EPTRESNRKTDSRL) has biased composition (basic and acidic residues). Phosphoserine occurs at positions 594 and 611. At T696 the chain carries Phosphothreonine. 5 positions are modified to phosphoserine: S707, S717, S718, S724, and S734.

In terms of processing, phosphorylated in mitosis.

It localises to the cytoplasm. The protein resides in the cytoskeleton. Functionally, may be involved in p53-induced cell cycle arrest in G2/M phase by interfering with microtubule rearrangements that are required to enter mitosis. Overexpression delays G2/M phase progression. This chain is G2 and S phase-expressed protein 1, found in Homo sapiens (Human).